A 94-amino-acid chain; its full sequence is Probable Fe(2+)-trafficking protein (94 aa).

Belongs to the Fe(2+)-trafficking protein family.

Its function is as follows. Could be a mediator in iron transactions between iron acquisition and iron-requiring processes, such as synthesis and/or repair of Fe-S clusters in biosynthetic enzymes. This is Probable Fe(2+)-trafficking protein from Haemophilus ducreyi (strain 35000HP / ATCC 700724).